Consider the following 900-residue polypeptide: Bifunctional uridylyltransferase/uridylyl-removing enzyme (900 aa).

Positions 1 to 342 (MPQVDPELFD…PCEQPVQIQP (342 aa)) are uridylyltransferase. The segment at 343 to 705 (LNSRFQLRDG…TTQREFESGS (363 aa)) is uridylyl-removing. Positions 461–583 (VDAHTLNLIK…VGDQTHLDYL (123 aa)) constitute an HD domain. ACT domains lie at 706 to 789 (QIFI…IIQR) and 816 to 891 (VLEV…DNGR).

Belongs to the GlnD family. Mg(2+) serves as cofactor.

It carries out the reaction [protein-PII]-L-tyrosine + UTP = [protein-PII]-uridylyl-L-tyrosine + diphosphate. The catalysed reaction is [protein-PII]-uridylyl-L-tyrosine + H2O = [protein-PII]-L-tyrosine + UMP + H(+). Uridylyltransferase (UTase) activity is inhibited by glutamine, while glutamine activates uridylyl-removing (UR) activity. Its function is as follows. Modifies, by uridylylation and deuridylylation, the PII regulatory proteins (GlnB and homologs), in response to the nitrogen status of the cell that GlnD senses through the glutamine level. Under low glutamine levels, catalyzes the conversion of the PII proteins and UTP to PII-UMP and PPi, while under higher glutamine levels, GlnD hydrolyzes PII-UMP to PII and UMP (deuridylylation). Thus, controls uridylylation state and activity of the PII proteins, and plays an important role in the regulation of nitrogen assimilation and metabolism. This chain is Bifunctional uridylyltransferase/uridylyl-removing enzyme, found in Pseudomonas aeruginosa (strain ATCC 15692 / DSM 22644 / CIP 104116 / JCM 14847 / LMG 12228 / 1C / PRS 101 / PAO1).